The sequence spans 852 residues: Elongation factor 2 (852 aa).

In terms of domain architecture, tr-type G spans 17-356 (RNIRNMSVIA…MIAFHLPSPV (340 aa)). 26–33 (AHVDHGKS) serves as a coordination point for GTP. 2 positions are modified to phosphothreonine: Thr-57 and Thr-59. GTP contacts are provided by residues 170 to 173 (NKMD) and 227 to 229 (SGL). Diphthamide is present on His-709.

It belongs to the TRAFAC class translation factor GTPase superfamily. Classic translation factor GTPase family. EF-G/EF-2 subfamily. Post-translationally, phosphorylation by EF-2 kinase completely inactivates EF-2. AMPylated by fic-1.

The protein resides in the cytoplasm. The enzyme catalyses GTP + H2O = GDP + phosphate + H(+). Functionally, catalyzes the GTP-dependent ribosomal translocation step during translation elongation. During this step, the ribosome changes from the pre-translocational (PRE) to the post-translocational (POST) state as the newly formed A-site-bound peptidyl-tRNA and P-site-bound deacylated tRNA move to the P and E sites, respectively. Catalyzes the coordinated movement of the two tRNA molecules, the mRNA and conformational changes in the ribosome. Involved in the morphogenesis of epidermal tissues. This chain is Elongation factor 2 (eef-2), found in Caenorhabditis elegans.